We begin with the raw amino-acid sequence, 392 residues long: Putative glutamate--cysteine ligase 2 (392 aa).

A disordered region spans residues 1–21 (MMPVSGWRAVSSAPASSSAGR). Residues 9–19 (AVSSAPASSSA) are compositionally biased toward low complexity.

This sequence belongs to the glutamate--cysteine ligase type 2 family. YbdK subfamily.

The enzyme catalyses L-cysteine + L-glutamate + ATP = gamma-L-glutamyl-L-cysteine + ADP + phosphate + H(+). ATP-dependent carboxylate-amine ligase which exhibits weak glutamate--cysteine ligase activity. The polypeptide is Putative glutamate--cysteine ligase 2 (Mycobacterium ulcerans (strain Agy99)).